Reading from the N-terminus, the 3119-residue chain is Huntingtin (3119 aa).

Residues 1–65 (MATLEKLMKA…LPGPAEEPLH (65 aa)) are disordered. K9 carries the N6-acetyllysine modification. Pro residues predominate over residues 24–60 (QPPPQAPPPPPPPPPQPPQPPPQGQPPPPPPPLPGPA). K155 and K213 each carry N6-acetyllysine. HEAT repeat units follow at residues 183-220 (PYLVNLLPCLTRTSKRPEESVQETLAAAVPKIMASFGN) and 225-262 (NEIKVLLKAFIANLKSSSPTVRRTAAGSAVSICQHSRR). An N6-acetyllysine modification is found at K322. S396, S398, and S411 each carry phosphoserine. K421 is modified (N6-acetyllysine). Positions 470 to 481 (GHDIITEQPRSQ) are interaction with ZDHHC17. The segment at 495-558 (DLTSAATDGD…DSAVTPSDSS (64 aa)) is disordered. Polar residues predominate over residues 529 to 558 (DGTQASSPISDSSQTTTEGPDSAVTPSDSS). G530 carries N-myristoyl glycine lipidation. A phosphoserine mark is found at S620 and S623. HEAT repeat units follow at residues 782-819 (FSLVDCIPLLQKTLKDESSVTCKLACTAVRHCVLSLCS) and 882-920 (KLQERVLNNVVIYLLGDEDPRVRHVAATSLTRLVPKLFY). The disordered stretch occupies residues 1146–1204 (KAALPSLTNPPSLSPIRRKGKEKEPGEQASTPMSPKKVGEASAASRQSDTSGPVTASKS). Low complexity predominate over residues 1149–1160 (LPSLTNPPSLSP). 2 positions are modified to phosphoserine; by CDK5: S1159 and S1179. Residues 1189 to 1204 (ASRQSDTSGPVTASKS) show a composition bias toward polar residues. The HEAT 5 repeat unit spans residues 1404–1441 (LFEPLVIKALKQYTTTTSVQLQKQVLDLLAQLVQLRVN). At S1853 the chain carries Phosphoserine. The Nuclear export signal motif lies at 2372–2381 (IVISLARLPL). The disordered stretch occupies residues 2610–2637 (EEEWDEEEEEESDVPAPTSPPVSPVNSR). The segment covering 2611–2622 (EEWDEEEEEESD) has biased composition (acidic residues).

Belongs to the huntingtin family. In terms of assembly, interacts with PFN1. Interacts through its N-terminus with PRPF40A. Interacts with PQBP1. Interacts with SETD2. Interacts with SH3GLB1. Interacts with SYVN. Interacts with TPR; the interaction is inhibited by forms of Huntingtin with expanded polyglutamine stretch. Interacts with ZDHHC13 (via ANK repeats). Interacts with ZDHHC17 (via ANK repeats). Interacts with F8A1/F8A2/F8A3. Found in a complex with F8A1/F8A2/F8A3, HTT and RAB5A; mediates the recruitment of HTT by RAB5A. Post-translationally, phosphorylation at Ser-1159 and Ser-1179 by CDK5 in response to DNA damage in nuclei of neurons protects neurons against polyglutamine expansion as well as DNA damage mediated toxicity. In terms of processing, cleaved by caspases downstream of the polyglutamine stretch. Myristoylated at Gly-530, following proteolytic cleavage at Asp-529. In terms of tissue distribution, the highest level is seen throughout the brain, but it is also found in the stomach, heart, testis, adipose tissue, muscle, spleen, liver, and kidney.

It is found in the cytoplasm. The protein resides in the nucleus. It localises to the cytoplasmic vesicle. Its subcellular location is the autophagosome. In terms of biological role, may play a role in microtubule-mediated transport or vesicle function. Functionally, promotes the formation of autophagic vesicles. The protein is Huntingtin (Htt) of Mus musculus (Mouse).